Here is a 367-residue protein sequence, read N- to C-terminus: Probable glutamine synthetase (367 aa).

The region spanning 30–110 (IQATYVWIDG…VMCDTLDHQM (81 aa)) is the GS beta-grasp domain. The 251-residue stretch at 117 to 367 (HRQACAEIMH…TAMIAQSILF (251 aa)) folds into the GS catalytic domain.

The protein belongs to the glutamine synthetase family. In terms of assembly, homooctamer.

The protein localises to the cytoplasm. The enzyme catalyses L-glutamate + NH4(+) + ATP = L-glutamine + ADP + phosphate + H(+). This Caenorhabditis elegans protein is Probable glutamine synthetase (gln-2).